A 236-amino-acid chain; its full sequence is N-acetyl-alpha-D-glucosaminyl L-malate deacetylase 1 (236 aa).

His-12, Asp-15, and His-113 together coordinate Zn(2+).

It belongs to the PIGL family. Requires Zn(2+) as cofactor.

The enzyme catalyses (S)-malyl N-acetyl-alpha-D-glucosaminide + H2O = (S)-malyl alpha-D-glucosaminide + acetate. Involved in bacillithiol (BSH) biosynthesis. Catalyzes the second step of the pathway, the deacetylation of N-acetylglucosaminylmalate (GlcNAc-Mal) to glucosamine malate (GlcN-Mal). The sequence is that of N-acetyl-alpha-D-glucosaminyl L-malate deacetylase 1 from Bacillus subtilis (strain 168).